Consider the following 467-residue polypeptide: 3-isopropylmalate dehydratase large subunit (467 aa).

Residues cysteine 347, cysteine 407, and cysteine 410 each contribute to the [4Fe-4S] cluster site.

This sequence belongs to the aconitase/IPM isomerase family. LeuC type 1 subfamily. In terms of assembly, heterodimer of LeuC and LeuD. [4Fe-4S] cluster serves as cofactor.

It catalyses the reaction (2R,3S)-3-isopropylmalate = (2S)-2-isopropylmalate. Its pathway is amino-acid biosynthesis; L-leucine biosynthesis; L-leucine from 3-methyl-2-oxobutanoate: step 2/4. Functionally, catalyzes the isomerization between 2-isopropylmalate and 3-isopropylmalate, via the formation of 2-isopropylmaleate. The protein is 3-isopropylmalate dehydratase large subunit of Picosynechococcus sp. (strain ATCC 27264 / PCC 7002 / PR-6) (Agmenellum quadruplicatum).